A 288-amino-acid polypeptide reads, in one-letter code: Shikimate dehydrogenase (NADP(+)) (288 aa).

Shikimate is bound by residues 18-20 (SRS) and T65. The Proton acceptor role is filled by K69. E81 is an NADP(+) binding site. Residues N90 and D106 each contribute to the shikimate site. Residues 131–135 (GAGGA), 155–160 (NRTLAK), and M223 each bind NADP(+). Y225 contributes to the shikimate binding site. Position 246 (G246) interacts with NADP(+).

This sequence belongs to the shikimate dehydrogenase family. Homodimer.

The enzyme catalyses shikimate + NADP(+) = 3-dehydroshikimate + NADPH + H(+). Its pathway is metabolic intermediate biosynthesis; chorismate biosynthesis; chorismate from D-erythrose 4-phosphate and phosphoenolpyruvate: step 4/7. Involved in the biosynthesis of the chorismate, which leads to the biosynthesis of aromatic amino acids. Catalyzes the reversible NADPH linked reduction of 3-dehydroshikimate (DHSA) to yield shikimate (SA). The polypeptide is Shikimate dehydrogenase (NADP(+)) (Verminephrobacter eiseniae (strain EF01-2)).